The primary structure comprises 616 residues: MEALPPQVLKPLDCMSIYSRHREPENRHNELSTGRCGRGHVIFSSMKALQPQVLKPTGSHANLQQVLYAPAATIITAPASSHNDLSSLTGCSYAGVETLGKELFIYFGLKAMRVHFGMNGSMRINQPMKKGQENGRPIPIAVLEVQLTKDLICFYESTVDVRNASECQEKIRFFEELDVCSSKFSFPRAECEIKKQRTRMLCDILLDQMILPGVGNIIKNEALFDSGLHPGVQAGLLTDEQVSHLVKMTRDFTLLFYKCRKSGSALYKHYKVYKRPNCGQCGTKITVCRLGEHNRMTYFCPKCQKDKPQHVDVSKLPTRNSLIGWVQRTASNANEHVATSKEEHWACAVCTLINKPSDKQCDACLTLRPEVSSLAVSDEAAELNTDLVKYPCNNFAKVLPELKLNRRTAFGNTTLVLTDFGAKEGLADKNSQQNILNRSTFDVPLNNKYYHTKTPSNKRSNENEHWTNTLNAVNGHSAASNNVFNHPQKKLKTGHTTSNTIHLSSTISSPQSKMTGDAAAKTGNPQCSAHNVPCALQVVRKEGENKGRSFYTCSLPRERRCQYFEWADLHFPFCNHGKRCIVRTVLKIGPNNGKNFYVCPMGKDKQCNFFEWAKTE.

The FPG-type zinc-finger motif lies at 271–305; the sequence is KVYKRPNCGQCGTKITVCRLGEHNRMTYFCPKCQK. The RanBP2-type zinc-finger motif lies at 341–370; the sequence is KEEHWACAVCTLINKPSDKQCDACLTLRPE. Positions 491-524 are disordered; that stretch reads LKTGHTTSNTIHLSSTISSPQSKMTGDAAAKTGN. Residues 494–514 show a composition bias toward polar residues; it reads GHTTSNTIHLSSTISSPQSKM. The Zn(2+) site is built by Cys527, His530, Cys553, Cys561, Cys574, His576, Cys599, and Cys607. 2 GRF-type zinc fingers span residues 527 to 570 and 574 to 616; these read CSAH…ADLH and CNHG…AKTE.

Belongs to the FPG family.

Its subcellular location is the nucleus. It localises to the chromosome. The catalysed reaction is 2'-deoxyribonucleotide-(2'-deoxyribose 5'-phosphate)-2'-deoxyribonucleotide-DNA = a 3'-end 2'-deoxyribonucleotide-(2,3-dehydro-2,3-deoxyribose 5'-phosphate)-DNA + a 5'-end 5'-phospho-2'-deoxyribonucleoside-DNA + H(+). DNA glycosylase which prefers single-stranded DNA (ssDNA), or partially ssDNA structures such as bubble and fork structures, to double-stranded DNA (dsDNA). Mediates interstrand cross-link repair in response to replication stress: recruited to replication stress sites via interaction with ubiquitinated CMG helicase and acts by mediating DNA glycosylase activity. Cleaves one of the two N-glycosyl bonds comprising the interstrand cross-link, which avoids the formation of a double-strand break but generates an abasic site that is bypassed by translesion synthesis polymerases. The chain is Endonuclease 8-like 3 from Xenopus laevis (African clawed frog).